The following is a 536-amino-acid chain: Atrial natriuretic peptide receptor 3 (536 aa).

Positions 1–26 (MRSLLLFTFSACVLLARVLLAGGASS) are cleaved as a signal peptide. Residues 27 to 40 (GAGDTRPGSRRRAR) constitute a propeptide that is removed on maturation. Residues 41–478 (EALAAQKIEV…KSSGGLEESA (438 aa)) are Extracellular-facing. N-linked (GlcNAc...) asparagine glycosylation occurs at Asn-81. Residues Ser-101, Val-130, and Cys-131 each coordinate chloride. 2 disulfides stabilise this stretch: Cys-103–Cys-131 and Cys-208–Cys-256. N-linked (GlcNAc...) asparagine glycans are attached at residues Asn-288 and Asn-389. Residues 479-499 (VTGIVVGALLGAGLLMAFYFF) traverse the membrane as a helical segment. Topologically, residues 500-536 (RKKYRITIERRNQQEESNIGKHRELREDSIRSHFSVA) are cytoplasmic.

The protein belongs to the ANF receptor family. As to quaternary structure, homodimer; disulfide-linked. Interacts with OSTN.

It localises to the cell membrane. In terms of biological role, receptor for the natriuretic peptide hormones, binding with similar affinities atrial natriuretic peptide NPPA/ANP, brain natriuretic peptide NPPB/BNP, and C-type natriuretic peptide NPPC/CNP. May function as a clearance receptor for NPPA, NPPB and NPPC, regulating their local concentrations and effects. Acts as a regulator of osteoblast differentiation and bone growth by binding to its ligand osteocrin, thereby preventing binding between NPR3/NPR-C and natriuretic peptides, leading to increase cGMP production. The polypeptide is Atrial natriuretic peptide receptor 3 (Npr3) (Mus musculus (Mouse)).